Here is a 106-residue protein sequence, read N- to C-terminus: UPF0145 protein TM_0763 (106 aa).

It belongs to the UPF0145 family.

The polypeptide is UPF0145 protein TM_0763 (Thermotoga maritima (strain ATCC 43589 / DSM 3109 / JCM 10099 / NBRC 100826 / MSB8)).